Consider the following 623-residue polypeptide: V-type proton ATPase catalytic subunit A (623 aa).

Position 252–259 (252–259) interacts with ATP; it reads GAFGCGKT.

It belongs to the ATPase alpha/beta chains family. V-ATPase is a heteromultimeric enzyme composed of a peripheral catalytic V1 complex (main components: subunits A, B, C, D, E, and F) attached to an integral membrane V0 proton pore complex (main component: the proteolipid protein).

It catalyses the reaction ATP + H2O + 4 H(+)(in) = ADP + phosphate + 5 H(+)(out). Its function is as follows. Catalytic subunit of the peripheral V1 complex of vacuolar ATPase. V-ATPase vacuolar ATPase is responsible for acidifying a variety of intracellular compartments in eukaryotic cells. This chain is V-type proton ATPase catalytic subunit A (CVA69.24), found in Gossypium hirsutum (Upland cotton).